A 278-amino-acid polypeptide reads, in one-letter code: Sulfur carrier protein FdhD (278 aa).

Cys-117 serves as the catalytic Cysteine persulfide intermediate.

It belongs to the FdhD family.

It localises to the cytoplasm. Required for formate dehydrogenase (FDH) activity. Acts as a sulfur carrier protein that transfers sulfur from IscS to the molybdenum cofactor prior to its insertion into FDH. The protein is Sulfur carrier protein FdhD of Variovorax paradoxus (strain S110).